Here is a 521-residue protein sequence, read N- to C-terminus: Type-2 serine--tRNA ligase (521 aa).

Alanine 316 contributes to the L-serine binding site. Cysteine 318 provides a ligand contact to Zn(2+). Residue arginine 347 participates in L-serine binding. Residues 347–349 and 358–359 each bind ATP; these read RWE and RV. 364–366 is an L-serine binding site; it reads RVE. Residues glutamate 366 and cysteine 473 each coordinate Zn(2+). Arginine 480 contacts ATP.

This sequence belongs to the class-II aminoacyl-tRNA synthetase family. Type-2 seryl-tRNA synthetase subfamily. In terms of assembly, homodimer. Zn(2+) serves as cofactor.

It is found in the cytoplasm. It carries out the reaction tRNA(Ser) + L-serine + ATP = L-seryl-tRNA(Ser) + AMP + diphosphate + H(+). It catalyses the reaction tRNA(Sec) + L-serine + ATP = L-seryl-tRNA(Sec) + AMP + diphosphate + H(+). The protein operates within aminoacyl-tRNA biosynthesis; selenocysteinyl-tRNA(Sec) biosynthesis; L-seryl-tRNA(Sec) from L-serine and tRNA(Sec): step 1/1. In terms of biological role, catalyzes the attachment of serine to tRNA(Ser). Is also able to aminoacylate tRNA(Sec) with serine, to form the misacylated tRNA L-seryl-tRNA(Sec), which will be further converted into selenocysteinyl-tRNA(Sec). The chain is Type-2 serine--tRNA ligase (serS) from Methanocaldococcus jannaschii (strain ATCC 43067 / DSM 2661 / JAL-1 / JCM 10045 / NBRC 100440) (Methanococcus jannaschii).